Consider the following 66-residue polypeptide: Large ribosomal subunit protein bL28 (66 aa).

A disordered region spans residues 1-26; that stretch reads MAKDAITGARTRFGNQRSHALNSSRR. A compositionally biased stretch (polar residues) spans 13-25; sequence FGNQRSHALNSSR.

This sequence belongs to the bacterial ribosomal protein bL28 family.

The chain is Large ribosomal subunit protein bL28 from Leuconostoc citreum (strain KM20).